The chain runs to 62 residues: DNA gyrase inhibitor YacG (62 aa).

Residues C9, C12, C27, and C31 each contribute to the Zn(2+) site. The segment covering 43-53 (GYRIPGEKAPE) has biased composition (basic and acidic residues). Residues 43-62 (GYRIPGEKAPESGDEEPGDE) form a disordered region.

This sequence belongs to the DNA gyrase inhibitor YacG family. In terms of assembly, interacts with GyrB. Zn(2+) is required as a cofactor.

Inhibits all the catalytic activities of DNA gyrase by preventing its interaction with DNA. Acts by binding directly to the C-terminal domain of GyrB, which probably disrupts DNA binding by the gyrase. The polypeptide is DNA gyrase inhibitor YacG (Citrifermentans bemidjiense (strain ATCC BAA-1014 / DSM 16622 / JCM 12645 / Bem) (Geobacter bemidjiensis)).